The chain runs to 133 residues: Histone H2A.1 (133 aa).

The disordered stretch occupies residues Met-1–Ser-23. N-acetylserine is present on Ser-2. Residues Lys-6, Lys-9, Lys-11, Lys-13, and Lys-18 each carry the N6-acetyllysine modification. The residue at position 123 (Ser-123) is a Phosphoserine. Lys-124 is covalently cross-linked (Glycyl lysine isopeptide (Lys-Gly) (interchain with G-Cter in ubiquitin)). Position 129 is a phosphoserine (Ser-129).

It belongs to the histone H2A family. The nucleosome is a histone octamer containing two molecules each of H2A, H2B, H3 and H4 assembled in one H3-H4 heterotetramer and two H2A-H2B heterodimers. The octamer wraps approximately 147 bp of DNA. Post-translationally, monoubiquitination of Lys-124 gives a specific tag for epigenetic transcriptional repression. In terms of processing, acetylation occurs almost exclusively in the MAC.

The protein resides in the nucleus. Its subcellular location is the chromosome. Core component of nucleosome. Nucleosomes wrap and compact DNA into chromatin, limiting DNA accessibility to the cellular machineries which require DNA as a template. Histones thereby play a central role in transcription regulation, DNA repair, DNA replication and chromosomal stability. DNA accessibility is regulated via a complex set of post-translational modifications of histones, also called histone code, and nucleosome remodeling. This Tetrahymena pyriformis protein is Histone H2A.1 (HTA2).